Reading from the N-terminus, the 215-residue chain is Large ribosomal subunit protein uL4 (215 aa).

Positions 43–101 (HQRQGTSKTKERGEVRGSGRKLYRQKGTGNARVGDAQSPIRRGGGRAHGARPRDYAHDL) are disordered. Residues 50-59 (KTKERGEVRG) are compositionally biased toward basic and acidic residues.

Belongs to the universal ribosomal protein uL4 family. In terms of assembly, part of the 50S ribosomal subunit.

Its function is as follows. One of the primary rRNA binding proteins, this protein initially binds near the 5'-end of the 23S rRNA. It is important during the early stages of 50S assembly. It makes multiple contacts with different domains of the 23S rRNA in the assembled 50S subunit and ribosome. Functionally, forms part of the polypeptide exit tunnel. The protein is Large ribosomal subunit protein uL4 of Salinibacter ruber (strain DSM 13855 / M31).